The chain runs to 154 residues: Calmodulin-like protein 4 (154 aa).

EF-hand domains are found at residues 7-42 (EQMVAFQEAFLLFDKNGDGCITLEELAAVTRSLGLE), 43-78 (PTDQELNDMMREVDTDGNGIIDFQEFLSLIARKMKD), 80-115 (DGDEELKEAFEVLDKDQNGFISPTELRTVMTNLGEK), and 116-151 (MTDEEVEQMIREADTDGDGQVNYDEFVIMMKNAERK). The Ca(2+) site is built by D20, N22, D24, C26, E31, D56, D58, N60, E67, D93, D95, N97, and E104. K115 is subject to N6,N6,N6-trimethyllysine. The Ca(2+) site is built by D129, D131, D133, Q135, and E140.

Belongs to the calmodulin family.

In terms of biological role, potential calcium sensor. In Oryza sativa subsp. japonica (Rice), this protein is Calmodulin-like protein 4 (CML4).